Here is a 196-residue protein sequence, read N- to C-terminus: Probable thymidylate kinase (196 aa).

Residue 7 to 14 participates in ATP binding; the sequence is GIDGSGKS.

It belongs to the thymidylate kinase family.

The enzyme catalyses dTMP + ATP = dTDP + ADP. The protein is Probable thymidylate kinase of Natronomonas pharaonis (strain ATCC 35678 / DSM 2160 / CIP 103997 / JCM 8858 / NBRC 14720 / NCIMB 2260 / Gabara) (Halobacterium pharaonis).